We begin with the raw amino-acid sequence, 201 residues long: IMP cyclohydrolase (201 aa).

This sequence belongs to the archaeal IMP cyclohydrolase family.

It carries out the reaction IMP + H2O = 5-formamido-1-(5-phospho-D-ribosyl)imidazole-4-carboxamide. It participates in purine metabolism; IMP biosynthesis via de novo pathway; IMP from 5-formamido-1-(5-phospho-D-ribosyl)imidazole-4-carboxamide: step 1/1. Its function is as follows. Catalyzes the cyclization of 5-formylamidoimidazole-4-carboxamide ribonucleotide to IMP. This Methanocella arvoryzae (strain DSM 22066 / NBRC 105507 / MRE50) protein is IMP cyclohydrolase.